Reading from the N-terminus, the 385-residue chain is Protein hunchback (385 aa).

2 disordered regions span residues 1–94 (IGGI…YDAM) and 124–216 (ESRA…PGLR). A compositionally biased stretch (low complexity) spans 63–77 (SASPSSSSKDSNGHS). 2 stretches are compositionally biased toward basic and acidic residues: residues 126 to 135 (RASDARDHSP) and 173 to 203 (PERR…REGS). 4 C2H2-type zinc fingers span residues 229 to 251 (FKCK…SKEH), 258 to 280 (LCCR…MRNH), 286 to 308 (FQCS…LKSH), and 314 to 338 (YRCA…KYQH). The interval 361-385 (TRRGPKQKPLSKIFEQQTGTNNHSP) is disordered. The span at 374–385 (FEQQTGTNNHSP) shows a compositional bias: polar residues.

This sequence belongs to the hunchback C2H2-type zinc-finger protein family.

It localises to the nucleus. Functionally, gap class segmentation protein that controls development of head structures. This is Protein hunchback (hb) from Bombyx mori (Silk moth).